The chain runs to 226 residues: Cytidylate kinase (226 aa).

12 to 20 contributes to the ATP binding site; it reads GPSGAGKGT.

This sequence belongs to the cytidylate kinase family. Type 1 subfamily.

Its subcellular location is the cytoplasm. The catalysed reaction is CMP + ATP = CDP + ADP. It carries out the reaction dCMP + ATP = dCDP + ADP. In Colwellia psychrerythraea (strain 34H / ATCC BAA-681) (Vibrio psychroerythus), this protein is Cytidylate kinase.